Reading from the N-terminus, the 469-residue chain is Pentatricopeptide repeat-containing protein At2g34370, mitochondrial (469 aa).

A mitochondrion-targeting transit peptide spans 1-65 (MVRLVCSRIL…QNRSFVQCRR (65 aa)). 4 PPR repeats span residues 142–172 (DARS…MPKR), 173–207 (NSET…GNKP), 208–238 (DKEI…MYRD), and 244–274 (SMED…MTVE). Residues 375 to 469 (DIGFVPATRV…NGVCSCKDYW (95 aa)) are type DYW motif.

It belongs to the PPR family. PCMP-H subfamily.

It is found in the mitochondrion. This is Pentatricopeptide repeat-containing protein At2g34370, mitochondrial (PCMP-H25) from Arabidopsis thaliana (Mouse-ear cress).